Reading from the N-terminus, the 509-residue chain is Telomeric repeat-binding factor 2-interacting protein 1 (509 aa).

The region spanning 1 to 91 (MAALGGLTHS…KLLDVDDYRL (91 aa)) is the BRCT domain. Residues 93–168 (GSHGRPRKSQ…RKKENKMDCS (76 aa)) form a disordered region. Over residues 115 to 127 (VGESSQESDQKQQ) the composition is skewed to polar residues. Residues 159 to 168 (RKKENKMDCS) are compositionally biased toward basic and acidic residues. Positions 185–239 (RRNVFTEKEDVAIMLYVRENAPHRGTGVSLWKEMEQKQVVKRTWQAIKNRYFRYL) constitute a Myb-like domain. Disordered regions lie at residues 249–359 (LTDD…ENQD) and 399–423 (DLPSSQSQTQVDEVSSSPDASESEG). 2 stretches are compositionally biased toward basic and acidic residues: residues 286–296 (GVAEKTGEKLS) and 321–344 (VEERGQEVTEGAIKRSEGNKKSTE). Residues 401–418 (PSSQSQTQVDEVSSSPDA) show a composition bias toward polar residues. The Nuclear localization signal signature appears at 493–509 (QKYGADNVAKRVAFLAS).

The protein belongs to the RAP1 family. Homodimer. Component of the shelterin complex (telosome). Interacts with terf2; the interaction is direct.

It localises to the nucleus. The protein localises to the chromosome. It is found in the telomere. Acts both as a regulator of telomere function and as a transcription regulator. Involved in the regulation of telomere length and protection as a component of the shelterin complex (telosome). Does not bind DNA directly: recruited to telomeric double-stranded 5'-TTAGGG-3' repeats via its interaction with terf2. Independently of its function in telomeres, also acts as a transcription regulator: recruited to extratelomeric 5'-TTAGGG-3' sites via its association with terf2 or other factors, and regulates gene expression. In Xenopus tropicalis (Western clawed frog), this protein is Telomeric repeat-binding factor 2-interacting protein 1 (terf2ip).